The chain runs to 513 residues: Pantetheinase (513 aa).

Positions 1–22 are cleaved as a signal peptide; that stretch reads MITSPLLAYVAILFFCVLKASS. The 268-residue stretch at 40–307 folds into the CN hydrolase domain; the sequence is APLTPVSHEE…GKLLLSQLDS (268 aa). Glu-80 (proton acceptor) is an active-site residue. Asn-147 carries N-linked (GlcNAc...) asparagine glycosylation. Residue Lys-179 is the Proton donor of the active site. Cys-212 (nucleophile) is an active-site residue. N-linked (GlcNAc...) asparagine glycosylation is found at Asn-315 and Asn-353. Residue Gly-487 is the site of GPI-anchor amidated glycine attachment. Positions 488–513 are cleaved as a propeptide — removed in mature form; that stretch reads ASADLVAQGLRVMLGVIITIMYSLSW.

Belongs to the carbon-nitrogen hydrolase superfamily. BTD/VNN family. Monomer. In terms of tissue distribution, detected in kidney (at protein level).

The protein resides in the cell membrane. It carries out the reaction (R)-pantetheine + H2O = cysteamine + (R)-pantothenate. Amidohydrolase that hydrolyzes specifically one of the carboamide linkages in D-pantetheine thus recycling pantothenic acid (vitamin B5) and releasing cysteamine. The protein is Pantetheinase (VNN1) of Sus scrofa (Pig).